We begin with the raw amino-acid sequence, 422 residues long: Replication factor C large subunit (422 aa).

63–70 (GPPGVGKT) provides a ligand contact to ATP.

Belongs to the activator 1 small subunits family. RfcL subfamily. Heteromultimer composed of small subunits (RfcS) and large subunits (RfcL).

Functionally, part of the RFC clamp loader complex which loads the PCNA sliding clamp onto DNA. This is Replication factor C large subunit from Pyrobaculum arsenaticum (strain DSM 13514 / JCM 11321 / PZ6).